Here is a 418-residue protein sequence, read N- to C-terminus: Gamma-glutamyl phosphate reductase (418 aa).

The protein belongs to the gamma-glutamyl phosphate reductase family.

It is found in the cytoplasm. It catalyses the reaction L-glutamate 5-semialdehyde + phosphate + NADP(+) = L-glutamyl 5-phosphate + NADPH + H(+). It participates in amino-acid biosynthesis; L-proline biosynthesis; L-glutamate 5-semialdehyde from L-glutamate: step 2/2. Its function is as follows. Catalyzes the NADPH-dependent reduction of L-glutamate 5-phosphate into L-glutamate 5-semialdehyde and phosphate. The product spontaneously undergoes cyclization to form 1-pyrroline-5-carboxylate. The polypeptide is Gamma-glutamyl phosphate reductase (Desulfotalea psychrophila (strain LSv54 / DSM 12343)).